The following is a 427-amino-acid chain: V-type proton ATPase subunit C 2 (427 aa).

The segment at 292–319 (HKVKVTPLGNPDRPAAGQTDRERESEGE) is disordered.

The protein belongs to the V-ATPase C subunit family. V-ATPase is a heteromultimeric enzyme made up of two complexes: the ATP-hydrolytic V1 complex and the proton translocation V0 complex. The V1 complex consists of three catalytic AB heterodimers that form a heterohexamer, three peripheral stalks each consisting of EG heterodimers, one central rotor including subunits D and F, and the regulatory subunits C and H. The proton translocation complex V0 consists of the proton transport subunit a, a ring of proteolipid subunits c9c'', rotary subunit d, subunits e and f, and the accessory subunits ATP6AP1/Ac45 and ATP6AP2/PRR. As to expression, kidney and placenta.

Its function is as follows. Subunit of the V1 complex of vacuolar(H+)-ATPase (V-ATPase), a multisubunit enzyme composed of a peripheral complex (V1) that hydrolyzes ATP and a membrane integral complex (V0) that translocates protons. V-ATPase is responsible for acidifying and maintaining the pH of intracellular compartments and in some cell types, is targeted to the plasma membrane, where it is responsible for acidifying the extracellular environment. Subunit C is necessary for the assembly of the catalytic sector of the enzyme and is likely to have a specific function in its catalytic activity. This Homo sapiens (Human) protein is V-type proton ATPase subunit C 2 (ATP6V1C2).